The chain runs to 460 residues: ATP synthase subunit beta (460 aa).

150-157 (GGAGVGKT) serves as a coordination point for ATP.

This sequence belongs to the ATPase alpha/beta chains family. As to quaternary structure, F-type ATPases have 2 components, CF(1) - the catalytic core - and CF(0) - the membrane proton channel. CF(1) has five subunits: alpha(3), beta(3), gamma(1), delta(1), epsilon(1). CF(0) has three main subunits: a(1), b(2) and c(9-12). The alpha and beta chains form an alternating ring which encloses part of the gamma chain. CF(1) is attached to CF(0) by a central stalk formed by the gamma and epsilon chains, while a peripheral stalk is formed by the delta and b chains.

It localises to the cell inner membrane. The enzyme catalyses ATP + H2O + 4 H(+)(in) = ADP + phosphate + 5 H(+)(out). Functionally, produces ATP from ADP in the presence of a proton gradient across the membrane. The catalytic sites are hosted primarily by the beta subunits. This is ATP synthase subunit beta from Salmonella gallinarum (strain 287/91 / NCTC 13346).